Here is a 269-residue protein sequence, read N- to C-terminus: uncharacterized protein (269 aa).

15 to 41 contacts NADP(+); it reads QKSVLITGCSSGIGLESALELKRQGFH. S146 provides a ligand contact to substrate. The Proton acceptor role is filled by Y159.

The protein belongs to the short-chain dehydrogenases/reductases (SDR) family.

This is an uncharacterized protein from Escherichia coli O6:H1 (strain CFT073 / ATCC 700928 / UPEC).